The chain runs to 178 residues: M-phase-specific PLK1-interacting protein (178 aa).

A compositionally biased stretch (pro residues) spans Met-1–Ser-15. The disordered stretch occupies residues Met-1–Glu-134. Residues Gly-17–Gly-34 show a composition bias toward gly residues. Asymmetric dimethylarginine is present on Arg-36. 2 positions are modified to phosphoserine: Ser-39 and Ser-46. Thr-50 is subject to Phosphothreonine. Omega-N-methylarginine is present on Arg-56. Asymmetric dimethylarginine is present on residues Arg-58, Arg-67, and Arg-76. Positions Gly-78–Ser-96 are enriched in low complexity. Ser-79, Ser-81, Ser-92, Ser-103, and Ser-114 each carry phosphoserine. A compositionally biased stretch (polar residues) spans Gln-97–Phe-121. An Omega-N-methylarginine modification is found at Arg-116. Thr-119 is subject to Phosphothreonine. Phosphoserine is present on residues Ser-123 and Ser-132.

Interacts with PLK1; phosphorylation-dependent. Post-translationally, phosphorylated during mitosis in the cell cycle probably by CDK1.

Its subcellular location is the nucleus. It localises to the cytoplasm. The protein resides in the cytoskeleton. It is found in the microtubule organizing center. The protein localises to the centrosome. In terms of biological role, may play a role in maintenance of cell cycle integrity by regulating mitosis or cytokinesis. The sequence is that of M-phase-specific PLK1-interacting protein (Mplkip) from Mus musculus (Mouse).